The following is a 288-amino-acid chain: Lipoyl synthase (288 aa).

The [4Fe-4S] cluster site is built by Cys42, Cys47, Cys53, Cys68, Cys72, Cys75, and Ser280. The 216-residue stretch at 54–269 (WGEGTATFMI…EKYGIELGFR (216 aa)) folds into the Radical SAM core domain.

Belongs to the radical SAM superfamily. Lipoyl synthase family. [4Fe-4S] cluster serves as cofactor.

The protein resides in the cytoplasm. It carries out the reaction [[Fe-S] cluster scaffold protein carrying a second [4Fe-4S](2+) cluster] + N(6)-octanoyl-L-lysyl-[protein] + 2 oxidized [2Fe-2S]-[ferredoxin] + 2 S-adenosyl-L-methionine + 4 H(+) = [[Fe-S] cluster scaffold protein] + N(6)-[(R)-dihydrolipoyl]-L-lysyl-[protein] + 4 Fe(3+) + 2 hydrogen sulfide + 2 5'-deoxyadenosine + 2 L-methionine + 2 reduced [2Fe-2S]-[ferredoxin]. It functions in the pathway protein modification; protein lipoylation via endogenous pathway; protein N(6)-(lipoyl)lysine from octanoyl-[acyl-carrier-protein]: step 2/2. Functionally, catalyzes the radical-mediated insertion of two sulfur atoms into the C-6 and C-8 positions of the octanoyl moiety bound to the lipoyl domains of lipoate-dependent enzymes, thereby converting the octanoylated domains into lipoylated derivatives. This Flavobacterium johnsoniae (strain ATCC 17061 / DSM 2064 / JCM 8514 / BCRC 14874 / CCUG 350202 / NBRC 14942 / NCIMB 11054 / UW101) (Cytophaga johnsonae) protein is Lipoyl synthase.